We begin with the raw amino-acid sequence, 244 residues long: Phosphatidylinositol phosphate synthase (244 aa).

3 helical membrane passes run 24-42, 49-66, and 72-91; these read YARA…FLIR, TVTL…LVFY, and FWGT…DGNM. 48 to 51 is a binding site for a CDP-1,2-diacyl-sn-glycerol; it reads DTVT. Residues D85 and D88 each contribute to the Mg(2+) site. A CDP-1,2-diacyl-sn-glycerol-binding residues include G89, R93, and S99. D106 and D110 together coordinate Mg(2+). The Proton acceptor role is filled by D110. 3 helical membrane passes run 117–137, 174–190, and 196–214; these read IFGG…LCAV, LVIS…HKFG, and VLLP…VTLI.

This sequence belongs to the CDP-alcohol phosphatidyltransferase class-I family. In terms of assembly, homodimer. Mg(2+) is required as a cofactor.

It is found in the cell membrane. It carries out the reaction a CDP-1,2-diacyl-sn-glycerol + 1D-myo-inositol 3-phosphate = a 1,2-diacyl-sn-glycero-3-phospho-(1D-myo-inositol-3-phosphate) + CMP + H(+). The enzyme catalyses 1,2-di-(9Z-octadecenoyl)-sn-glycero-3-cytidine-5'-diphosphate + 1D-myo-inositol 3-phosphate = 1,2-di-(9Z-octadecenoyl)-sn-glycero-3-phospho-(1D-myo-inositol-3-phosphate) + CMP + H(+). The protein operates within phospholipid metabolism; phosphatidylinositol phosphate biosynthesis. Its function is as follows. Catalyzes the conjugation of the 1'-hydroxyl group of D-myo-inositol-3-phosphate (also named L-myo-inositol-1-phosphate) with a lipid tail of cytidine diphosphate diacylglycerol (CDP-DAG), forming phosphatidylinositol phosphate (PIP) and CMP. PIP is a precursor of phosphatidylinositol (PI) which is an essential lipid required for cell wall formation. The protein is Phosphatidylinositol phosphate synthase of Streptomyces avermitilis (strain ATCC 31267 / DSM 46492 / JCM 5070 / NBRC 14893 / NCIMB 12804 / NRRL 8165 / MA-4680).